The primary structure comprises 229 residues: Ribose-5-phosphate isomerase A (229 aa).

Residues 28–31, 84–87, and 97–100 contribute to the substrate site; these read TGST, DGAD, and KGGG. Residue E106 is the Proton acceptor of the active site. K124 contributes to the substrate binding site.

The protein belongs to the ribose 5-phosphate isomerase family. In terms of assembly, homodimer.

The enzyme catalyses aldehydo-D-ribose 5-phosphate = D-ribulose 5-phosphate. The protein operates within carbohydrate degradation; pentose phosphate pathway; D-ribose 5-phosphate from D-ribulose 5-phosphate (non-oxidative stage): step 1/1. In terms of biological role, catalyzes the reversible conversion of ribose-5-phosphate to ribulose 5-phosphate. The polypeptide is Ribose-5-phosphate isomerase A (Lacticaseibacillus paracasei (strain ATCC 334 / BCRC 17002 / CCUG 31169 / CIP 107868 / KCTC 3260 / NRRL B-441) (Lactobacillus paracasei)).